A 455-amino-acid chain; its full sequence is MSPVSQRSLTLIGAGLAGCLLAILLSRRGWQVTVYERRGDPRIKGYESGRSINLALAERGRHALRQAGAEDAVMAKAVMMRGRMVHPLVGQPQLQRYGRDDSEVIWSIHRAALNVALLDLAEQAGARVHFYRRLHTVDFDAGYARFIDDRDDQPHEIHFQSLIGSDGAGSALRAAMQRKSPLGERTEFLDHSYKELEIPPQPGGGFRIEGNALHIWPRGRYMCIALPNDGGTFTVTLFLPNAGEPSFATTRTGDEAFALFARDFPDALPLIPQLKEHWEEHPPGLLGTLTLDRWHLDGRALLIGDAAHAMVPFHGQGMNCAFEDCVALADQLDAHDDLASAFAAFEAARRDDAAAIQQMALENYLEMRDRVDDPDFLLQRELEQQLQARWPTRFVPHYTMVTFLRTRYSIALARSEIQREILVQATRGHSDLSRIDWSALEAVVHARLEPLDGAH.

The protein belongs to the aromatic-ring hydroxylase family. KMO subfamily. FAD serves as cofactor.

The enzyme catalyses L-kynurenine + NADPH + O2 + H(+) = 3-hydroxy-L-kynurenine + NADP(+) + H2O. It functions in the pathway cofactor biosynthesis; NAD(+) biosynthesis; quinolinate from L-kynurenine: step 1/3. In terms of biological role, catalyzes the hydroxylation of L-kynurenine (L-Kyn) to form 3-hydroxy-L-kynurenine (L-3OHKyn). Required for synthesis of quinolinic acid. In Xanthomonas axonopodis pv. citri (strain 306), this protein is Kynurenine 3-monooxygenase.